Here is a 200-residue protein sequence, read N- to C-terminus: Elongation factor Ts (200 aa).

An involved in Mg(2+) ion dislocation from EF-Tu region spans residues T82–V85.

Belongs to the EF-Ts family.

It is found in the cytoplasm. Functionally, associates with the EF-Tu.GDP complex and induces the exchange of GDP to GTP. It remains bound to the aminoacyl-tRNA.EF-Tu.GTP complex up to the GTP hydrolysis stage on the ribosome. This chain is Elongation factor Ts, found in Solidesulfovibrio magneticus (strain ATCC 700980 / DSM 13731 / RS-1) (Desulfovibrio magneticus).